We begin with the raw amino-acid sequence, 156 residues long: Transcriptional repressor NrdR (156 aa).

A zinc finger spans residues 3 to 34; the sequence is CPFCSETDTKVIDSRLVADGAQVRRRRECLTC. The ATP-cone domain occupies 49-139; sequence PRVIKQDGTR…VYRSFQDLSE (91 aa).

The protein belongs to the NrdR family. It depends on Zn(2+) as a cofactor.

Functionally, negatively regulates transcription of bacterial ribonucleotide reductase nrd genes and operons by binding to NrdR-boxes. The sequence is that of Transcriptional repressor NrdR from Saccharophagus degradans (strain 2-40 / ATCC 43961 / DSM 17024).